The primary structure comprises 261 residues: Arcelin-5A (261 aa).

A signal peptide spans 1–21 (MASSKLLSLALFLVLLTHANS). N43, N91, and N100 each carry an N-linked (GlcNAc...) asparagine glycan. C167 and C203 form a disulfide bridge. The propeptide occupies 255–261 (ILLNNIL).

It belongs to the leguminous lectin family. Monomer. In terms of processing, the C-terminal segment appears to be highly susceptible to proteolysis.

Seed storage. This carbohydrate-binding lectin has toxic effects on bean bruchid pests. The polypeptide is Arcelin-5A (ARC5A) (Phaseolus vulgaris (Kidney bean)).